Here is a 468-residue protein sequence, read N- to C-terminus: uncharacterized protein (468 aa).

The segment at 1-22 (MVKRSSHRQVVLDEDDEENYNN) is disordered. Residues 85–123 (CPICTEALQRPFTTHCGHTYCYECLLNWLKESKSCPTCR) form an RING-type zinc finger. Residues 386 to 402 (DSLNSSSNNSPSHNNIH) show a composition bias toward low complexity. Positions 386-468 (DSLNSSSNNS…TIQLDSDEES (83 aa)) are disordered. Polar residues predominate over residues 417–434 (IVTNGTGLRSSQSSSQNR).

The protein localises to the nucleus. This is an uncharacterized protein from Schizosaccharomyces pombe (strain 972 / ATCC 24843) (Fission yeast).